Reading from the N-terminus, the 291-residue chain is 4-hydroxy-tetrahydrodipicolinate synthase (291 aa).

Thr44 is a binding site for pyruvate. Tyr132 functions as the Proton donor/acceptor in the catalytic mechanism. Lys160 serves as the catalytic Schiff-base intermediate with substrate. Residue Ile202 participates in pyruvate binding.

It belongs to the DapA family. As to quaternary structure, homotetramer; dimer of dimers.

The protein resides in the cytoplasm. It carries out the reaction L-aspartate 4-semialdehyde + pyruvate = (2S,4S)-4-hydroxy-2,3,4,5-tetrahydrodipicolinate + H2O + H(+). It functions in the pathway amino-acid biosynthesis; L-lysine biosynthesis via DAP pathway; (S)-tetrahydrodipicolinate from L-aspartate: step 3/4. In terms of biological role, catalyzes the condensation of (S)-aspartate-beta-semialdehyde [(S)-ASA] and pyruvate to 4-hydroxy-tetrahydrodipicolinate (HTPA). This Syntrophus aciditrophicus (strain SB) protein is 4-hydroxy-tetrahydrodipicolinate synthase.